A 274-amino-acid chain; its full sequence is MSSFLVRPFCLRATTTTTTTTTTTALVQQQLRALTTTTALTYHQPRVPSSAIPIPNVSGRVPLPDSTPVPEDFKIEIPSYPYGPRRVYHQSNTGLYGSALIRFGNNVSKRNEIKTRRKWRPNVQQKRLWSKSLGVFVRTRVTTRVLRTIDKVGGLDEYLLGHKAARVKELGPWGWMLRWRIMQTPEIRERFAKEREALGLPPRREEDEEKSLEEQLREFQVAGIQFAEGKAPKTKGQLKEEADRLIKKSETEEFGLGQEEDLFMKEEPKPTKMA.

The segment at 249 to 274 (SETEEFGLGQEEDLFMKEEPKPTKMA) is disordered. The span at 262-274 (LFMKEEPKPTKMA) shows a compositional bias: basic and acidic residues.

The protein belongs to the bacterial ribosomal protein bL28 family. In terms of assembly, component of the mitochondrial large ribosomal subunit (mt-LSU). Mature N.crassa 74S mitochondrial ribosomes consist of a small (37S) and a large (54S) subunit. The 37S small subunit contains a 16S ribosomal RNA (16S mt-rRNA) and 32 different proteins. The 54S large subunit contains a 23S rRNA (23S mt-rRNA) and 42 different proteins.

It localises to the mitochondrion. Its function is as follows. Component of the mitochondrial ribosome (mitoribosome), a dedicated translation machinery responsible for the synthesis of mitochondrial genome-encoded proteins, including at least some of the essential transmembrane subunits of the mitochondrial respiratory chain. The mitoribosomes are attached to the mitochondrial inner membrane and translation products are cotranslationally integrated into the membrane. The sequence is that of Large ribosomal subunit protein bL28m (mrpl24) from Neurospora crassa (strain ATCC 24698 / 74-OR23-1A / CBS 708.71 / DSM 1257 / FGSC 987).